We begin with the raw amino-acid sequence, 409 residues long: 1-deoxy-D-xylulose 5-phosphate reductoisomerase (409 aa).

NADPH contacts are provided by Thr5, Gly6, Ser7, Ile8, Gly31, Asn33, and Asn122. Lys123 is a binding site for 1-deoxy-D-xylulose 5-phosphate. Residue Glu124 coordinates NADPH. Asp148 contributes to the Mn(2+) binding site. 1-deoxy-D-xylulose 5-phosphate contacts are provided by Ser149, Glu150, Ser186, and His209. Glu150 serves as a coordination point for Mn(2+). Residue Gly215 participates in NADPH binding. 4 residues coordinate 1-deoxy-D-xylulose 5-phosphate: Ser222, Asn227, Lys228, and Glu231. Position 231 (Glu231) interacts with Mn(2+).

This sequence belongs to the DXR family. It depends on Mg(2+) as a cofactor. The cofactor is Mn(2+).

The catalysed reaction is 2-C-methyl-D-erythritol 4-phosphate + NADP(+) = 1-deoxy-D-xylulose 5-phosphate + NADPH + H(+). The protein operates within isoprenoid biosynthesis; isopentenyl diphosphate biosynthesis via DXP pathway; isopentenyl diphosphate from 1-deoxy-D-xylulose 5-phosphate: step 1/6. Functionally, catalyzes the NADPH-dependent rearrangement and reduction of 1-deoxy-D-xylulose-5-phosphate (DXP) to 2-C-methyl-D-erythritol 4-phosphate (MEP). The protein is 1-deoxy-D-xylulose 5-phosphate reductoisomerase of Parasynechococcus marenigrum (strain WH8102).